The primary structure comprises 600 residues: Aspartate--tRNA(Asp/Asn) ligase (600 aa).

An L-aspartate-binding site is contributed by glutamate 187. The tract at residues 211–214 (QIFK) is aspartate. Residues arginine 233 and histidine 463 each contribute to the L-aspartate site. Residue 233 to 235 (RDE) coordinates ATP. ATP is bound at residue glutamate 497. An L-aspartate-binding site is contributed by arginine 504. Position 549-552 (549-552 (GVDR)) interacts with ATP.

It belongs to the class-II aminoacyl-tRNA synthetase family. Type 1 subfamily. As to quaternary structure, homodimer.

It is found in the cytoplasm. It carries out the reaction tRNA(Asx) + L-aspartate + ATP = L-aspartyl-tRNA(Asx) + AMP + diphosphate. Functionally, aspartyl-tRNA synthetase with relaxed tRNA specificity since it is able to aspartylate not only its cognate tRNA(Asp) but also tRNA(Asn). Reaction proceeds in two steps: L-aspartate is first activated by ATP to form Asp-AMP and then transferred to the acceptor end of tRNA(Asp/Asn). The protein is Aspartate--tRNA(Asp/Asn) ligase of Wolbachia pipientis wMel.